Consider the following 292-residue polypeptide: Protease HtpX homolog (292 aa).

2 consecutive transmembrane segments (helical) span residues 4–24 and 42–62; these read IFLF…TLRL and ALLV…LAMS. H147 is a binding site for Zn(2+). Residue E148 is part of the active site. H151 serves as a coordination point for Zn(2+). A run of 2 helical transmembrane segments spans residues 158 to 178 and 198 to 218; these read VTLA…SRII and FVTS…IVMW. E224 serves as a coordination point for Zn(2+).

It belongs to the peptidase M48B family. Zn(2+) is required as a cofactor.

It localises to the cell inner membrane. The protein is Protease HtpX homolog of Nitrosomonas eutropha (strain DSM 101675 / C91 / Nm57).